Consider the following 435-residue polypeptide: Adenylosuccinate synthetase (435 aa).

Residues 17 to 23 (GDEGKGK) and 47 to 49 (GHT) each bind GTP. Residue D18 is the Proton acceptor of the active site. Mg(2+) contacts are provided by D18 and G47. Residues 18–21 (DEGK), 45–48 (NAGH), T138, R152, N232, T247, and R311 each bind IMP. Catalysis depends on H48, which acts as the Proton donor. Residue 307-313 (VTTGRKR) coordinates substrate. Residues R313, 339–341 (KLD), and 421–423 (GVG) contribute to the GTP site.

The protein belongs to the adenylosuccinate synthetase family. In terms of assembly, homodimer. It depends on Mg(2+) as a cofactor.

It is found in the cytoplasm. The catalysed reaction is IMP + L-aspartate + GTP = N(6)-(1,2-dicarboxyethyl)-AMP + GDP + phosphate + 2 H(+). It participates in purine metabolism; AMP biosynthesis via de novo pathway; AMP from IMP: step 1/2. In terms of biological role, plays an important role in the de novo pathway and in the salvage pathway of purine nucleotide biosynthesis. Catalyzes the first committed step in the biosynthesis of AMP from IMP. The protein is Adenylosuccinate synthetase of Caenorhabditis briggsae.